The chain runs to 619 residues: Histone H3.v1 (619 aa).

Over residues 1–15 (MANKPKPSEHLRDLI) the composition is skewed to basic and acidic residues. Disordered stretches follow at residues 1 to 99 (MANK…GSSR) and 190 to 526 (ILPS…RKKR). 2 stretches are compositionally biased toward low complexity: residues 28–50 (QLKQ…LTQS) and 66–99 (STSE…GSSR). Residues 230–287 (DQEEEEEEEEEEEEEEEEEEEEEEEEEEEEEEEEEEEEEEEEEEEEEEEEEEEEEEEV) are compositionally biased toward acidic residues. Low complexity-rich tracts occupy residues 296 to 306 (GKPLPSPSLSS) and 314 to 325 (SSSVASSESSKQ). Residues 326-344 (SRVKVSKKPSPLIKKKPAP) are compositionally biased toward basic residues. Composition is skewed to low complexity over residues 345 to 360 (IKKV…QQQS), 385 to 408 (KNVL…LTPT), and 415 to 521 (IVTT…TPTT).

Belongs to the histone H3 family.

The chain is Histone H3.v1 (H3v1) from Dictyostelium discoideum (Social amoeba).